Consider the following 670-residue polypeptide: MEETEKKVATQEGRFFSKMKVFLMSLTCAYLAKSLSGVYMNSMLTQIERQFGIPTSVVGFITGSFEIGNLLLIVFVSYFGRKLHRPIIIGVGCVVMGLGCFLMASPHFLMGRYKYETTISPTSNLSSNSFLCIENRTQTLKPTQDPTECVKEIKSLMWIYVLIGNTMRGIGETPIMPLGISYIEDFAKSENSPLYIGILEMGKIVGPIIGLLLGSFFARVYVDIGSVNTDDLTITPTDTRWVGAWWIGFLVCAGVNILTSIPFFFFPKTLPKKELQDNVDVTKYEKVEKHRERAKKENLGITKDFLPFMKSLCCNPIYMLFSLTSVLQINGFASTFTFLPKYLEQQYGKSTSEAVFLIGVYSLPPVCLGYLISGFIMKKFKITVKKAAYIAFGLSLSEYFIFLCNYLLTCDNFPVAGLTTSYKGVQHPLYGEKNVLADCNTRCSCLTDTWDPVCGDNGLAYMSACLAGCEKSVGTGTNMVFQNCSCIGSSGNSSAVLGLCKKGPECDNKLQYFLIKSVFSSFIFSLAAIPGYMVLLRCVKSEEKSIGVGLHAFFIRLLAGIPAPVYFGALIDRTCLHWGTLKCGQPGACRMYDINRFRHIYLGLPAAVRGSSFLPAVFILILMRKFHFPGDIHSPDTELAEMKLTEKESECTDVCRSPKVENDGELKTKL.

Residues 1-20 (MEETEKKVATQEGRFFSKMK) are Cytoplasmic-facing. The helical transmembrane segment at 21–40 (VFLMSLTCAYLAKSLSGVYM) threads the bilayer. The Extracellular portion of the chain corresponds to 41–59 (NSMLTQIERQFGIPTSVVG). The helical transmembrane segment at 60-80 (FITGSFEIGNLLLIVFVSYFG) threads the bilayer. Residues 81–86 (RKLHRP) lie on the Cytoplasmic side of the membrane. A helical transmembrane segment spans residues 87–111 (IIIGVGCVVMGLGCFLMASPHFLMG). Topologically, residues 112 to 155 (RYKYETTISPTSNLSSNSFLCIENRTQTLKPTQDPTECVKEIKS) are extracellular. N-linked (GlcNAc...) asparagine glycosylation is found at Asn124 and Asn135. The helical transmembrane segment at 156-184 (LMWIYVLIGNTMRGIGETPIMPLGISYIE) threads the bilayer. Over 185-203 (DFAKSENSPLYIGILEMGK) the chain is Cytoplasmic. Residues 204–224 (IVGPIIGLLLGSFFARVYVDI) form a helical membrane-spanning segment. The Extracellular portion of the chain corresponds to 225-242 (GSVNTDDLTITPTDTRWV). A helical transmembrane segment spans residues 243-267 (GAWWIGFLVCAGVNILTSIPFFFFP). Topologically, residues 268–311 (KTLPKKELQDNVDVTKYEKVEKHRERAKKENLGITKDFLPFMKS) are cytoplasmic. A helical transmembrane segment spans residues 312–333 (LCCNPIYMLFSLTSVLQINGFA). Topologically, residues 334 to 353 (STFTFLPKYLEQQYGKSTSE) are extracellular. A helical transmembrane segment spans residues 354-377 (AVFLIGVYSLPPVCLGYLISGFIM). Residues 378–381 (KKFK) lie on the Cytoplasmic side of the membrane. The chain crosses the membrane as a helical span at residues 382 to 405 (ITVKKAAYIAFGLSLSEYFIFLCN). Residues 406 to 513 (YLLTCDNFPV…PECDNKLQYF (108 aa)) lie on the Extracellular side of the membrane. The region spanning 433 to 488 (KNVLADCNTRCSCLTDTWDPVCGDNGLAYMSACLAGCEKSVGTGTNMVFQNCSCIG) is the Kazal-like domain. 3 disulfide bridges follow: Cys439–Cys469, Cys445–Cys465, and Cys454–Cys486. N-linked (GlcNAc...) asparagine glycans are attached at residues Asn483 and Asn492. The helical transmembrane segment at 514-536 (LIKSVFSSFIFSLAAIPGYMVLL) threads the bilayer. Residues 537–545 (RCVKSEEKS) are Cytoplasmic-facing. A helical transmembrane segment spans residues 546 to 571 (IGVGLHAFFIRLLAGIPAPVYFGALI). Residues 572–605 (DRTCLHWGTLKCGQPGACRMYDINRFRHIYLGLP) lie on the Extracellular side of the membrane. Residues 606 to 623 (AAVRGSSFLPAVFILILM) traverse the membrane as a helical segment. At 624–670 (RKFHFPGDIHSPDTELAEMKLTEKESECTDVCRSPKVENDGELKTKL) the chain is on the cytoplasmic side. Position 634 is a phosphoserine (Ser634).

Belongs to the organo anion transporter (TC 2.A.60) family. In terms of assembly, binds to PDZK1. Interaction with PDZK1 is required for expression on hepatocyte surface. In terms of tissue distribution, highly expressed in liver, and at lower levels in kidney. Not detected in other tissues.

It is found in the basolateral cell membrane. The enzyme catalyses estrone 3-sulfate(out) + hydrogencarbonate(in) = estrone 3-sulfate(in) + hydrogencarbonate(out). It carries out the reaction taurocholate(out) + hydrogencarbonate(in) = taurocholate(in) + hydrogencarbonate(out). The catalysed reaction is L-thyroxine(out) = L-thyroxine(in). It catalyses the reaction prostaglandin E2(out) = prostaglandin E2(in). The enzyme catalyses 17beta-estradiol 17-O-(beta-D-glucuronate)(out) = 17beta-estradiol 17-O-(beta-D-glucuronate)(in). It carries out the reaction dehydroepiandrosterone 3-sulfate(out) = dehydroepiandrosterone 3-sulfate(in). In terms of biological role, mediates the Na(+)-independent transport of organic anions such as steroid sulfate conjugates (dehydroepiandrosterone sulfate (DHEAS), 17-beta-glucuronosyl estradiol, estrone-3-sulfate), conjugated (taurocholate) and unconjugated (cholate) bile acids, prostaglandin E2 (PGE2) and L-thyroxine T4. Also capable of transporting sulfobromophthalein (BSP), ouabain and gadoxetate. Hydrogencarbonate/HCO3(-) acts as the probable counteranion that exchanges for organic anions. Shows a pH-sensitive substrate specificity which may be ascribed to the protonation state of the binding site and leads to a stimulation of substrate transport in an acidic microenvironment. This Mus musculus (Mouse) protein is Solute carrier organic anion transporter family member 1A1.